The chain runs to 210 residues: Putative RING-H2 finger protein ATL50 (210 aa).

Residues 35–55 traverse the membrane as a helical segment; that stretch reads IVLLYITLLSIIFFVAALIHL. An RING-type; atypical zinc finger spans residues 122 to 164; the sequence is CAVCLREFTAEDELRLLPKCSHAFHVECIDTWLLTNSTCPLCR. The disordered stretch occupies residues 187 to 210; the sequence is SDGDNSQDSDSSFMLTDLDDVESK.

This sequence belongs to the RING-type zinc finger family. ATL subfamily.

Its subcellular location is the membrane. It catalyses the reaction S-ubiquitinyl-[E2 ubiquitin-conjugating enzyme]-L-cysteine + [acceptor protein]-L-lysine = [E2 ubiquitin-conjugating enzyme]-L-cysteine + N(6)-ubiquitinyl-[acceptor protein]-L-lysine.. It participates in protein modification; protein ubiquitination. In Arabidopsis thaliana (Mouse-ear cress), this protein is Putative RING-H2 finger protein ATL50 (ATL50).